Reading from the N-terminus, the 489-residue chain is Ribulose bisphosphate carboxylase large chain 2 (489 aa).

The substrate site is built by N128 and T178. The active-site Proton acceptor is K180. A substrate-binding site is contributed by K182. The Mg(2+) site is built by K206, D208, and E209. At K206 the chain carries N6-carboxylysine. The active-site Proton acceptor is the H298. Residues R299, H331, and S383 each coordinate substrate.

It belongs to the RuBisCO large chain family. Type I subfamily. Heterohexadecamer of 8 large chains and 8 small chains. The cofactor is Mg(2+).

It carries out the reaction 2 (2R)-3-phosphoglycerate + 2 H(+) = D-ribulose 1,5-bisphosphate + CO2 + H2O. It catalyses the reaction D-ribulose 1,5-bisphosphate + O2 = 2-phosphoglycolate + (2R)-3-phosphoglycerate + 2 H(+). Its function is as follows. RuBisCO catalyzes two reactions: the carboxylation of D-ribulose 1,5-bisphosphate, the primary event in carbon dioxide fixation, as well as the oxidative fragmentation of the pentose substrate. Both reactions occur simultaneously and in competition at the same active site. The sequence is that of Ribulose bisphosphate carboxylase large chain 2 from Nitrobacter winogradskyi (strain ATCC 25391 / DSM 10237 / CIP 104748 / NCIMB 11846 / Nb-255).